The sequence spans 180 residues: Magnetosome protein MamS (180 aa).

Over 1-21 (MDFRPDQVVARIRGAVEGALT) the chain is Cytoplasmic. Residues 22–42 (AQSVLGIGGALVLILVVIALL) traverse the membrane as a helical segment. Topologically, residues 43-180 (PDRFTRGEGK…EGLALWMTVQ (138 aa)) are lumenal.

Belongs to the magnetosome MamS family.

It localises to the magnetosome membrane. May play a role in magnetite crystal growth and size. The chain is Magnetosome protein MamS from Magnetospirillum gryphiswaldense (strain DSM 6361 / JCM 21280 / NBRC 15271 / MSR-1).